We begin with the raw amino-acid sequence, 81 residues long: ATP synthase subunit c (81 aa).

Transmembrane regions (helical) follow at residues 7–27 and 57–77; these read AASV…PGLG and FAFM…LLFA.

The protein belongs to the ATPase C chain family. F-type ATPases have 2 components, F(1) - the catalytic core - and F(0) - the membrane proton channel. F(1) has five subunits: alpha(3), beta(3), gamma(1), delta(1), epsilon(1). F(0) has four main subunits: a(1), b(1), b'(1) and c(10-14). The alpha and beta chains form an alternating ring which encloses part of the gamma chain. F(1) is attached to F(0) by a central stalk formed by the gamma and epsilon chains, while a peripheral stalk is formed by the delta, b and b' chains.

The protein localises to the cellular thylakoid membrane. F(1)F(0) ATP synthase produces ATP from ADP in the presence of a proton or sodium gradient. F-type ATPases consist of two structural domains, F(1) containing the extramembraneous catalytic core and F(0) containing the membrane proton channel, linked together by a central stalk and a peripheral stalk. During catalysis, ATP synthesis in the catalytic domain of F(1) is coupled via a rotary mechanism of the central stalk subunits to proton translocation. In terms of biological role, key component of the F(0) channel; it plays a direct role in translocation across the membrane. A homomeric c-ring of between 10-14 subunits forms the central stalk rotor element with the F(1) delta and epsilon subunits. In Prochlorococcus marinus (strain MIT 9301), this protein is ATP synthase subunit c.